The following is an 89-amino-acid chain: Small ribosomal subunit protein bS16 (89 aa).

This sequence belongs to the bacterial ribosomal protein bS16 family.

The polypeptide is Small ribosomal subunit protein bS16 (Psychrobacter arcticus (strain DSM 17307 / VKM B-2377 / 273-4)).